Consider the following 103-residue polypeptide: A-type ATP synthase subunit F (103 aa).

This sequence belongs to the V-ATPase F subunit family. In terms of assembly, has multiple subunits with at least A(3), B(3), C, D, E, F, H, I and proteolipid K(x).

The protein localises to the cell membrane. Component of the A-type ATP synthase that produces ATP from ADP in the presence of a proton gradient across the membrane. The polypeptide is A-type ATP synthase subunit F (Pyrococcus abyssi (strain GE5 / Orsay)).